The following is a 364-amino-acid chain: Triacylglycerol lipase (364 aa).

The N-terminal stretch at 1-44 is a signal peptide; that stretch reads MARTMRSRVVAGAVACAMSIAPFAGTTAVMTLATTHAAMAATAP. In terms of domain architecture, AB hydrolase-1 spans 54–266; sequence PIILVHGLSG…AIQPTLSVFG (213 aa). Leu-61 contacts substrate. Ser-131 acts as the Nucleophile in catalysis. Gln-132 provides a ligand contact to substrate. Cys-234 and Cys-314 form a disulfide bridge. Asp-286 lines the Ca(2+) pocket. Residues Asp-308 and His-330 each act as charge relay system in the active site. Ca(2+) contacts are provided by Asp-332, Gln-336, and Val-340.

This sequence belongs to the AB hydrolase superfamily. Pseudomonas lipase family. In terms of assembly, monomer. It depends on Ca(2+) as a cofactor.

The protein resides in the secreted. It carries out the reaction a triacylglycerol + H2O = a diacylglycerol + a fatty acid + H(+). With respect to regulation, inhibited by RC-(Rp,Sp)- and SC-(Rp,Sp)-1,2-dioctylcarbamoylglycero-3-O-p-nitrophenyl octylphosphonate. Also inhibited by diethyl-p-nitrophenylphosphate (E600). In terms of biological role, catalyzes the hydrolysis of triacylglycerol. It shows a preference for triacylglycerols with a chain length between 6 and 12 carbons. This chain is Triacylglycerol lipase, found in Burkholderia cepacia (Pseudomonas cepacia).